A 110-amino-acid chain; its full sequence is Quaternary ammonium compound-resistance protein QacE (110 aa).

The next 4 helical transmembrane spans lie at 1 to 21, 30 to 50, 58 to 78, and 85 to 105; these read MKGW…TSAL, LAPS…LSLV, VAYA…AWLL, and AWGF…NLLS.

Belongs to the drug/metabolite transporter (DMT) superfamily. Small multidrug resistance (SMR) (TC 2.A.7.1) family.

The protein localises to the cell membrane. Functionally, multidrug exporter. Is implicated for the resistance to bacteriocidal quaternary ammonium compounds. The chain is Quaternary ammonium compound-resistance protein QacE (qacE) from Escherichia coli.